A 398-amino-acid chain; its full sequence is Ethanolaminephosphotransferase 1 (398 aa).

Position 2 is an N-acetylalanine (A2). Transmembrane regions (helical) follow at residues 47–69 (WLAPNLITFSGFMLLVFNFLLLT), 84–103 (HVPDWVWIVVGILNFAAYTL), 123–145 (LFDHGLDSWSCVYFVVTVYSIFG), 150–172 (GVSVFVLYLLLWVVLFSFILSHW), 179–201 (VLFLPWGYDISQVTISFVYIVTA), 221–243 (LFTAMIIGCALCVTLPMSLLNFF), 256–278 (VYEAMVPFFSPCLLFTLCTVWIL), 291–310 (IFYFMVGTAFANITCQLIVC), 319–341 (TLNWLLLPLLLVVAAVIVGAATS), and 345–367 (SALLYTLTAAFTLAHIHYGVQVV). U388 is a non-standard amino acid (selenocysteine).

Belongs to the CDP-alcohol phosphatidyltransferase class-I family. Mg(2+) serves as cofactor. Requires Mn(2+) as cofactor.

It localises to the endoplasmic reticulum membrane. It catalyses the reaction CDP-ethanolamine + a 1,2-diacyl-sn-glycerol = a 1,2-diacyl-sn-glycero-3-phosphoethanolamine + CMP + H(+). The catalysed reaction is 1-O-alkyl-2-acyl-sn-glycerol + CDP-ethanolamine = a 1-O-alkyl-2-acyl-sn-glycero-3-phosphoethanolamine + CMP + H(+). It functions in the pathway phospholipid metabolism; phosphatidylethanolamine biosynthesis; phosphatidylethanolamine from ethanolamine: step 3/3. Functionally, ethanolaminephosphotransferase that catalyzes the transfer of phosphoethanolamine (PE) from CDP-ethanolamine to lipid acceptors, the final step in the synthesis of PE via the 'Kennedy' pathway. PE is the second most abundant phospholipid of membranes in mammals and is involved in various membrane-related cellular processes. The enzyme is critical for the synthesis of several PE species and also catalyzes the synthesis of plasmanyl-PE, a lipid required for proper myelination and neurodevelopment, from 1-alkyl-2-acylglycerol. In Mus musculus (Mouse), this protein is Ethanolaminephosphotransferase 1.